A 67-amino-acid polypeptide reads, in one-letter code: Guanine nucleotide-binding protein G(I)/G(S)/G(O) subunit gamma-13 (67 aa).

Cys-64 is subject to Cysteine methyl ester. Residue Cys-64 is the site of S-farnesyl cysteine attachment. The propeptide at 65-67 (TIL) is removed in mature form.

It belongs to the G protein gamma family. As to quaternary structure, g proteins are composed of 3 units, alpha, beta and gamma.

The protein localises to the cell membrane. In terms of biological role, guanine nucleotide-binding proteins (G proteins) are involved as a modulator or transducer in various transmembrane signaling systems. The beta and gamma chains are required for the GTPase activity, for replacement of GDP by GTP, and for G protein-effector interaction. The protein is Guanine nucleotide-binding protein G(I)/G(S)/G(O) subunit gamma-13 (Gng13) of Mus musculus (Mouse).